The sequence spans 89 residues: Small ribosomal subunit protein uS15 (89 aa).

This sequence belongs to the universal ribosomal protein uS15 family. In terms of assembly, part of the 30S ribosomal subunit. Forms a bridge to the 50S subunit in the 70S ribosome, contacting the 23S rRNA.

Functionally, one of the primary rRNA binding proteins, it binds directly to 16S rRNA where it helps nucleate assembly of the platform of the 30S subunit by binding and bridging several RNA helices of the 16S rRNA. Its function is as follows. Forms an intersubunit bridge (bridge B4) with the 23S rRNA of the 50S subunit in the ribosome. This is Small ribosomal subunit protein uS15 from Vibrio cholerae serotype O1 (strain ATCC 39541 / Classical Ogawa 395 / O395).